The sequence spans 270 residues: Undecaprenyl-diphosphatase 1 (270 aa).

A run of 7 helical transmembrane segments spans residues 5 to 25 (YYIL…PIPI), 42 to 62 (IEGF…VLLI), 89 to 109 (FFFI…GVLF), 117 to 137 (LKGV…LWII), 192 to 212 (FSFL…ITDI), 220 to 240 (TLFV…YISL), and 250 to 270 (GNLK…LIFL).

The protein belongs to the UppP family.

Its subcellular location is the cell membrane. The catalysed reaction is di-trans,octa-cis-undecaprenyl diphosphate + H2O = di-trans,octa-cis-undecaprenyl phosphate + phosphate + H(+). In terms of biological role, catalyzes the dephosphorylation of undecaprenyl diphosphate (UPP). Confers resistance to bacitracin. This Bacillus cereus (strain ATCC 10987 / NRS 248) protein is Undecaprenyl-diphosphatase 1.